The sequence spans 739 residues: Glycine--tRNA ligase (739 aa).

Residues 1 to 36 (MPSPRPVLLRGARAALLLLLPPRLLARPSLLLRRSL) constitute a mitochondrion transit peptide. Serine 35 carries the post-translational modification Phosphoserine. The WHEP-TRS domain occupies 63-119 (VLAPLRLAVRQQGDLVRKLKEDKAPQVDVDKAVAELKARKRVLEAKELALQPKDDIV). Position 204 is an N6-acetyllysine (lysine 204). Residue glutamate 299 participates in glycine binding. ATP is bound by residues 331–333 (RNE) and 342–343 (RV). Glycine is bound at residue glutamate 350. Tyrosine 453 is modified (phosphotyrosine). 457–458 (EI) lines the ATP pocket. The residue at position 501 (lysine 501) is an N6-acetyllysine. 576–578 (EPS) is a binding site for glycine. ATP is bound at residue arginine 583. Serine 700 is subject to Phosphoserine. Threonine 736 carries the post-translational modification Phosphothreonine.

It belongs to the class-II aminoacyl-tRNA synthetase family. Homodimer. In terms of tissue distribution, widely expressed, including in brain and spinal cord. As to expression, expressed in brain, spinal cord, muscle, heart and spleen. Expressed in brain, spinal cord, muscle, heart, spleen and liver.

Its subcellular location is the cytoplasm. It localises to the cell projection. The protein localises to the axon. The protein resides in the secreted. It is found in the extracellular exosome. Its subcellular location is the mitochondrion. It catalyses the reaction tRNA(Gly) + glycine + ATP = glycyl-tRNA(Gly) + AMP + diphosphate. The enzyme catalyses 2 ATP + H(+) = P(1),P(4)-bis(5'-adenosyl) tetraphosphate + diphosphate. Its activity is regulated as follows. Ap4A synthesis is inhibited by tRNA, via the disruption of the second ATP-binding site by direct blocking and/or by tRNA-induced conformational change. Functionally, catalyzes the ATP-dependent ligation of glycine to the 3'-end of its cognate tRNA, via the formation of an aminoacyl-adenylate intermediate (Gly-AMP). Also produces diadenosine tetraphosphate (Ap4A), a universal pleiotropic signaling molecule needed for cell regulation pathways, by direct condensation of 2 ATPs. Thereby, may play a special role in Ap4A homeostasis. This chain is Glycine--tRNA ligase, found in Homo sapiens (Human).